The chain runs to 640 residues: DNA topoisomerase 3 (640 aa).

Residues 21 to 175 (RVLCVAEKNS…WRAQFSHLEP (155 aa)) form the Toprim domain. Mg(2+)-binding residues include glutamate 27, aspartate 137, and aspartate 139. The region spanning 189-618 (DMKLVAAVEC…QLLPLYKEAF (430 aa)) is the Topo IA-type catalytic domain. Tyrosine 354 serves as the catalytic O-(5'-phospho-DNA)-tyrosine intermediate.

Belongs to the type IA topoisomerase family. Mg(2+) serves as cofactor.

The enzyme catalyses ATP-independent breakage of single-stranded DNA, followed by passage and rejoining.. Its function is as follows. Introduces a single-strand break via transesterification at a target site in duplex DNA. Releases the supercoiling and torsional tension of DNA introduced during the DNA replication and transcription by transiently cleaving and rejoining one strand of the DNA duplex. The scissile phosphodiester is attacked by the catalytic tyrosine of the enzyme, resulting in the formation of a DNA-(5'-phosphotyrosyl)-enzyme intermediate and the expulsion of a 3'-OH DNA strand. This chain is DNA topoisomerase 3 (TOP3), found in Candidozyma auris (Yeast).